We begin with the raw amino-acid sequence, 221 residues long: Intraflagellar transport-associated protein (221 aa).

Position 59 is a phosphoserine (S59).

In terms of assembly, interacts with IFT122; the interaction associates IFTAP with IFT-A complex.

In terms of biological role, seems to play a role in ciliary BBSome localization, maybe through interaction with IFT-A complex. The polypeptide is Intraflagellar transport-associated protein (Homo sapiens (Human)).